A 289-amino-acid polypeptide reads, in one-letter code: Protein SET (289 aa).

A disordered region spans residues 1–45 (MAPKRQSAILPQPKKPRPAAAPKLEDKSASPGLPKGEKEQQEAIE). A N,N,N-trimethylalanine; by NTM1 modification is found at Ala-2. Phosphoserine is present on Ser-7. An N6-acetyllysine modification is found at Pro-11. Lys-15 is modified (phosphoserine). Lys-23 carries the post-translational modification N6-acetyllysine. Lys-23 carries the post-translational modification Phosphothreonine. Ser-28 is subject to Phosphoserine. The tract at residues 31-77 (PGLPKGEKEQQEAIEHIDEVQNEIDRLNEQASEEILKVEQKYNKLRQ) is dimerization. The span at 35–45 (KGEKEQQEAIE) shows a compositional bias: basic and acidic residues. Ser-62 is modified (phosphoserine). Lys-67 is modified (N6-acetyllysine). Residues 78-224 (PFFQKRSELI…ELGEVIKDDI (147 aa)) are earmuff domain. Phosphotyrosine is present on Tyr-145. Lys-149 bears the N6-acetyllysine mark. Lys-153 is covalently cross-linked (Glycyl lysine isopeptide (Lys-Gly) (interchain with G-Cter in ubiquitin)). Disordered stretches follow at residues 157-206 (LNES…TWFT) and 235-289 (PDMD…GEDD). A compositionally biased stretch (basic and acidic residues) spans 168-180 (TEIKWKSGKDLTK). Lys-171 is subject to N6-acetyllysine. Over residues 236–289 (DMDDEEGEAEDDDDDDEEEEGLEDIDEEGDEDEGEEDDDEDEGEEGEEDEGEDD) the composition is skewed to acidic residues.

It belongs to the nucleosome assembly protein (NAP) family. Headphone-shaped homodimer. Isoform 1 and isoform 2 interact directly with each other and with ANP32A within the tripartite INHAT (inhibitor of acetyltransferases) complex. Isoform 1 and isoform 2 interact also with histones. Isoform 2 is a omponent of the SET complex, composed of at least ANP32A, APEX1, HMGB2, NME1, SET and TREX1, but not NME2 or TREX2. Within this complex, directly interacts with ANP32A, NME1, HMGB2 and TREX1; the interaction with ANP32A is enhanced after cleavage. Interacts with APBB1, CHTOP, SETBP1, SGO1. Some glutamate residues are glycylated by TTLL8. This modification occurs exclusively on glutamate residues and results in a glycine chain on the gamma-carboxyl group. Post-translationally, N-terminus of isoform 1 is methylated by METTL11A/NTM1. Mainly trimethylated. In terms of processing, cleaved after Lys-176 by GZMA. The cleavage inhibits its nucleosome assembly activity and disrupts the inhibition on NME1.

It localises to the cytoplasm. It is found in the cytosol. Its subcellular location is the endoplasmic reticulum. The protein resides in the nucleus. The protein localises to the nucleoplasm. In terms of biological role, multitasking protein, involved in apoptosis, transcription, nucleosome assembly and histone chaperoning. Isoform 2 anti-apoptotic activity is mediated by inhibition of the GZMA-activated DNase, NME1. In the course of cytotoxic T-lymphocyte (CTL)-induced apoptosis, GZMA cleaves SET, disrupting its binding to NME1 and releasing NME1 inhibition. Isoform 1 and isoform 2 are potent inhibitors of protein phosphatase 2A. Isoform 1 and isoform 2 inhibit EP300/CREBBP and PCAF-mediated acetylation of histones (HAT) and nucleosomes, most probably by masking the accessibility of lysines of histones to the acetylases. The predominant target for inhibition is histone H4. HAT inhibition leads to silencing of HAT-dependent transcription and prevents active demethylation of DNA. Both isoforms stimulate DNA replication of the adenovirus genome complexed with viral core proteins; however, isoform 2 specific activity is higher. The protein is Protein SET (Set) of Mus musculus (Mouse).